The chain runs to 400 residues: 1-deoxy-D-xylulose 5-phosphate reductoisomerase (400 aa).

NADPH contacts are provided by Thr-10, Gly-11, Ser-12, Ile-13, Gly-36, Asn-38, and Asn-124. Lys-125 lines the 1-deoxy-D-xylulose 5-phosphate pocket. Position 126 (Glu-126) interacts with NADPH. A Mn(2+)-binding site is contributed by Asp-150. 1-deoxy-D-xylulose 5-phosphate is bound by residues Ser-151, Glu-152, Ser-186, and His-209. Residue Glu-152 participates in Mn(2+) binding. Gly-215 lines the NADPH pocket. Positions 222, 227, 228, and 231 each coordinate 1-deoxy-D-xylulose 5-phosphate. A Mn(2+)-binding site is contributed by Glu-231.

This sequence belongs to the DXR family. Requires Mg(2+) as cofactor. It depends on Mn(2+) as a cofactor.

It catalyses the reaction 2-C-methyl-D-erythritol 4-phosphate + NADP(+) = 1-deoxy-D-xylulose 5-phosphate + NADPH + H(+). It participates in isoprenoid biosynthesis; isopentenyl diphosphate biosynthesis via DXP pathway; isopentenyl diphosphate from 1-deoxy-D-xylulose 5-phosphate: step 1/6. Its function is as follows. Catalyzes the NADPH-dependent rearrangement and reduction of 1-deoxy-D-xylulose-5-phosphate (DXP) to 2-C-methyl-D-erythritol 4-phosphate (MEP). This chain is 1-deoxy-D-xylulose 5-phosphate reductoisomerase, found in Aliivibrio fischeri (strain ATCC 700601 / ES114) (Vibrio fischeri).